The sequence spans 573 residues: ESX-1 secretion system protein EccA1 (573 aa).

An ATP-binding site is contributed by 334–341 (GPPGTGKT).

This sequence belongs to the CbxX/CfxQ family. In terms of assembly, part of the ESX-1 / type VII secretion system (T7SS), which is composed of cytosolic and membrane components.

The protein resides in the cytoplasm. Its function is as follows. Part of the ESX-1 / type VII specialized secretion system (T7SS), which exports several proteins including EsxA and EsxB. EccA1 exhibits ATPase activity and may provide energy for the export of ESX-1 substrates. The polypeptide is ESX-1 secretion system protein EccA1 (Mycobacterium leprae (strain TN)).